Consider the following 206-residue polypeptide: Cytochrome c oxidase assembly factor 8 (206 aa).

The transit peptide at Met-1 to Leu-39 directs the protein to the mitochondrion.

It belongs to the COA8 family. N-terminal mitochondrial targeting sequence is cleaved from the mature protein once in the mitochondrion. In terms of processing, in normal conditions, the cytoplasmic precursor protein is rapidly degraded by the ubiquitination-proteasome system (UPS). Oxidative stress induces protein stabilization and import into mitochondria where it protects COX from degradation. Expressed in fibroblasts.

The protein localises to the mitochondrion inner membrane. Required for cytochrome c complex (COX) IV assembly and function Protects COX assembly from oxidation-induced degradation, COX being the terminal component of the mitochondrial respiratory chain. This Homo sapiens (Human) protein is Cytochrome c oxidase assembly factor 8.